Consider the following 150-residue polypeptide: NADH-quinone oxidoreductase subunit A (150 aa).

3 consecutive transmembrane segments (helical) span residues 14–34, 70–90, and 98–118; these read WAFA…LLGA, LVAM…AWAV, and LGFI…FYLV.

This sequence belongs to the complex I subunit 3 family. NDH-1 is composed of 13 different subunits. Subunits NuoA, H, J, K, L, M, N constitute the membrane sector of the complex.

The protein resides in the cell inner membrane. It catalyses the reaction a quinone + NADH + 5 H(+)(in) = a quinol + NAD(+) + 4 H(+)(out). In terms of biological role, NDH-1 shuttles electrons from NADH, via FMN and iron-sulfur (Fe-S) centers, to quinones in the respiratory chain. The immediate electron acceptor for the enzyme in this species is believed to be ubiquinone. Couples the redox reaction to proton translocation (for every two electrons transferred, four hydrogen ions are translocated across the cytoplasmic membrane), and thus conserves the redox energy in a proton gradient. In Proteus mirabilis (strain HI4320), this protein is NADH-quinone oxidoreductase subunit A.